Here is a 194-residue protein sequence, read N- to C-terminus: Small ribosomal subunit protein uS4 (194 aa).

An N6-acetyllysine modification is found at lysine 66. Lysine 93 is covalently cross-linked (Glycyl lysine isopeptide (Lys-Gly) (interchain with G-Cter in SUMO2)). The 75-residue stretch at arginine 108 to glutamine 182 folds into the S4 RNA-binding domain. Lysine 116 carries the post-translational modification N6-acetyllysine. Lysine 139 participates in a covalent cross-link: Glycyl lysine isopeptide (Lys-Gly) (interchain with G-Cter in SUMO2). Residue serine 153 is modified to Phosphoserine. Lysine 155 is modified (N6-acetyllysine). Positions arginine 162–aspartate 194 are disordered. Serine 163 bears the Phosphoserine mark.

This sequence belongs to the universal ribosomal protein uS4 family. In terms of assembly, component of the small ribosomal subunit. Part of the small subunit (SSU) processome, composed of more than 70 proteins and the RNA chaperone small nucleolar RNA (snoRNA) U3.

Its subcellular location is the cytoplasm. The protein resides in the nucleus. The protein localises to the nucleolus. Component of the small ribosomal subunit. The ribosome is a large ribonucleoprotein complex responsible for the synthesis of proteins in the cell. Part of the small subunit (SSU) processome, first precursor of the small eukaryotic ribosomal subunit. During the assembly of the SSU processome in the nucleolus, many ribosome biogenesis factors, an RNA chaperone and ribosomal proteins associate with the nascent pre-rRNA and work in concert to generate RNA folding, modifications, rearrangements and cleavage as well as targeted degradation of pre-ribosomal RNA by the RNA exosome. This is Small ribosomal subunit protein uS4 (RPS9) from Papio anubis (Olive baboon).